The chain runs to 353 residues: Protein RecA (353 aa).

Residue 67-74 (GPESSGKT) coordinates ATP.

This sequence belongs to the RecA family.

The protein localises to the cytoplasm. Functionally, can catalyze the hydrolysis of ATP in the presence of single-stranded DNA, the ATP-dependent uptake of single-stranded DNA by duplex DNA, and the ATP-dependent hybridization of homologous single-stranded DNAs. It interacts with LexA causing its activation and leading to its autocatalytic cleavage. The polypeptide is Protein RecA (Chlamydia pneumoniae (Chlamydophila pneumoniae)).